A 313-amino-acid chain; its full sequence is MPSYRAPKIAAAEITPERFFLDRRTFIAAAAGSLALSVPKPSRAAALEASKSTYRADDPATPEKDATTYNNFYEFGTGKGDPAANSANFKPAPWTVKVDGLVGKPREFGLEELLAFPLEERIYRMRCVEAWSMVIPWIGFPLAALLDRVEPLGSAKYVAFETVVRPEEMPGQSGYFQPLEWPYREGLRLDEARHPLTILSVGLYGKTLPNQNGAPIRLVVPWKYGFKGIKSIVRISLTETPPPCTWNLAGPSEYGFYANVNPAVDHPRWSQATENRIGEGGFFGANRRDTLPFNGYAEDVASLYAGMDLRVNF.

A signal peptide (tat-type signal) is located at residues 1-46; sequence MPSYRAPKIAAAEITPERFFLDRRTFIAAAAGSLALSVPKPSRAAA. Residues Asn70, 73 to 74, Cys127, Thr162, Asn212, Arg217, and 228 to 230 each bind Mo-molybdopterin; these read YE and GIK.

The protein belongs to the MsrP family. Heterodimer of a catalytic subunit (MsrP) and a heme-binding subunit (MsrQ). Requires Mo-molybdopterin as cofactor. In terms of processing, predicted to be exported by the Tat system. The position of the signal peptide cleavage has not been experimentally proven.

It is found in the periplasm. The catalysed reaction is L-methionyl-[protein] + a quinone + H2O = L-methionyl-(S)-S-oxide-[protein] + a quinol. It carries out the reaction L-methionyl-[protein] + a quinone + H2O = L-methionyl-(R)-S-oxide-[protein] + a quinol. Part of the MsrPQ system that repairs oxidized periplasmic proteins containing methionine sulfoxide residues (Met-O), using respiratory chain electrons. Thus protects these proteins from oxidative-stress damage caused by reactive species of oxygen and chlorine generated by the host defense mechanisms. MsrPQ is essential for the maintenance of envelope integrity under bleach stress, rescuing a wide series of structurally unrelated periplasmic proteins from methionine oxidation. The catalytic subunit MsrP is non-stereospecific, being able to reduce both (R-) and (S-) diastereoisomers of methionine sulfoxide. In Rhizobium meliloti (strain 1021) (Ensifer meliloti), this protein is Protein-methionine-sulfoxide reductase catalytic subunit MsrP.